A 76-amino-acid polypeptide reads, in one-letter code: Parvalbumin beta 3 (76 aa).

The residue at position 1 (Ala1) is an N-acetylalanine. The EF-hand domain occupies 31 to 66 (KSPEEVKKFFAIIDQDHSGFIEEEELKLFLQTFSAG). Ca(2+) is bound by residues Asp44, Asp46, Ser48, Phe50, Glu52, and Glu55.

This sequence belongs to the parvalbumin family.

Functionally, in muscle, parvalbumin is thought to be involved in relaxation after contraction. It binds two calcium ions. The chain is Parvalbumin beta 3 from Merluccius polylepis (Southern hake).